We begin with the raw amino-acid sequence, 306 residues long: Palmitoyl-protein thioesterase 1 (306 aa).

The first 27 residues, 1–27, serve as a signal peptide directing secretion; that stretch reads MASSSCLWLLALAFLLGSCASLALGHL. Disulfide bonds link Cys-45-Cys-46, Cys-96-Cys-128, and Cys-152-Cys-160. Residue Ser-115 is part of the active site. N-linked (GlcNAc...) asparagine glycans are attached at residues Asn-197, Asn-212, and Asn-232. Residues Asp-233 and His-289 contribute to the active site.

This sequence belongs to the palmitoyl-protein thioesterase family. Interacts with CLN5, ATP5F1A and ATP5F1B. Glycosylated. In terms of tissue distribution, spleen, brain, seminal vesicle, and testis. Lower levels of activity in liver, heart, lung, and skeletal muscle.

The protein resides in the lysosome. The protein localises to the secreted. It localises to the golgi apparatus. Its subcellular location is the endoplasmic reticulum. The catalysed reaction is S-hexadecanoyl-L-cysteinyl-[protein] + H2O = L-cysteinyl-[protein] + hexadecanoate + H(+). It carries out the reaction hexadecanoyl-CoA + H2O = hexadecanoate + CoA + H(+). It catalyses the reaction S-hexadecanoyl-N-acetylcysteamine + H2O = N-acetylcysteamine + hexadecanoate + H(+). The enzyme catalyses S-hexadecanoyl-N-acetylcysteine methyl ester + H2O = N-acetylcysteine methyl ester + hexadecanoate + H(+). With respect to regulation, palmitoylation reduces PPT1 enzymatic activity. Functionally, has thioesterase activity against fatty acid thioesters with 14 -18 carbons, including palmitoyl-CoA, S-palmitoyl-N-acetylcysteamine, and palmitoylated proteins. In contrast to PPT2, PPT1 can hydrolyze palmitoylated proteins and palmitoylcysteine. This chain is Palmitoyl-protein thioesterase 1 (PPT1), found in Bos taurus (Bovine).